Here is a 266-residue protein sequence, read N- to C-terminus: Undecaprenyl-diphosphatase (266 aa).

Helical transmembrane passes span M1–I21, Q39–F59, W87–I107, A115–F135, V144–T164, A183–V203, A218–L238, and M246–A266.

Belongs to the UppP family.

It localises to the cell inner membrane. The enzyme catalyses di-trans,octa-cis-undecaprenyl diphosphate + H2O = di-trans,octa-cis-undecaprenyl phosphate + phosphate + H(+). In terms of biological role, catalyzes the dephosphorylation of undecaprenyl diphosphate (UPP). Confers resistance to bacitracin. This chain is Undecaprenyl-diphosphatase, found in Shewanella sediminis (strain HAW-EB3).